The sequence spans 144 residues: Large ribosomal subunit protein uL15 (144 aa).

Over residues 1–13 the composition is skewed to basic and acidic residues; that stretch reads MKLNELKPAEGSR. The interval 1 to 47 is disordered; that stretch reads MKLNELKPAEGSRKVRNRVGRGDSSGNGKTAGRGQKGQKARSKTRLG. Positions 23–35 are enriched in gly residues; that stretch reads DSSGNGKTAGRGQ.

Belongs to the universal ribosomal protein uL15 family. As to quaternary structure, part of the 50S ribosomal subunit.

Functionally, binds to the 23S rRNA. This chain is Large ribosomal subunit protein uL15, found in Levilactobacillus brevis (strain ATCC 367 / BCRC 12310 / CIP 105137 / JCM 1170 / LMG 11437 / NCIMB 947 / NCTC 947) (Lactobacillus brevis).